A 229-amino-acid chain; its full sequence is PKHD-type hydroxylase BRADO6316 (229 aa).

The Fe2OG dioxygenase domain maps to glutamine 78–serine 180. Positions 98, 100, and 161 each coordinate Fe cation. Arginine 171 contacts 2-oxoglutarate.

Fe(2+) serves as cofactor. The cofactor is L-ascorbate.

This chain is PKHD-type hydroxylase BRADO6316, found in Bradyrhizobium sp. (strain ORS 278).